The sequence spans 225 residues: MPFDARTRPLTAPQARVLATLLEKSRTVPDSYPLTLNSLLAGCNQKSSRDPVMQLTESEVQQALDELRQQTLVLEIGGARVARWEHNFTRGVGVPDQSAALLGLLMLRGPQTAGELRINAERWHRFADISSVEAFLDELQSRSDDKGGPLVTLLPRAPGAREPRWAHLLCGPVDASLAQMASASPASRSEEDGALAQRVQALEDEVAALRATVQRLCEQLGVAEH.

It belongs to the UPF0502 family.

This chain is UPF0502 protein Ajs_3392, found in Acidovorax sp. (strain JS42).